Here is a 233-residue protein sequence, read N- to C-terminus: Sugar fermentation stimulation protein homolog (233 aa).

This sequence belongs to the SfsA family.

The protein is Sugar fermentation stimulation protein homolog of Teredinibacter turnerae (strain ATCC 39867 / T7901).